A 476-amino-acid polypeptide reads, in one-letter code: Exodeoxyribonuclease 7 large subunit (476 aa).

The protein belongs to the XseA family. As to quaternary structure, heterooligomer composed of large and small subunits.

The protein localises to the cytoplasm. The catalysed reaction is Exonucleolytic cleavage in either 5'- to 3'- or 3'- to 5'-direction to yield nucleoside 5'-phosphates.. Its function is as follows. Bidirectionally degrades single-stranded DNA into large acid-insoluble oligonucleotides, which are then degraded further into small acid-soluble oligonucleotides. The polypeptide is Exodeoxyribonuclease 7 large subunit (Bartonella tribocorum (strain CIP 105476 / IBS 506)).